Reading from the N-terminus, the 210-residue chain is MGGKWSKRSMGGWSAIRERMRRAEPRAEPAADGVGAVSRDLEKHGAITSSNTAATNADCAWLEAQEEEEVGFPVRPQVPLRPMTYKAALDISHFLKEKGGLEGLIWSQRRQEILDLWIYHTQGYFPDWQNYTPGPGIRYPLTFGWCFKLVPVEPEKVEEANEGENNSLLHPMSLHGMEDAEKEVLVWRFDSKLAFHHMARELHPEYYKDC.

A disordered region spans residues 1–37 (MGGKWSKRSMGGWSAIRERMRRAEPRAEPAADGVGAV). Residue glycine 2 is the site of N-myristoyl glycine; by host attachment. Serine 6 carries the phosphoserine; by host modification. Basic and acidic residues predominate over residues 16–29 (IRERMRRAEPRAEP). Positions 66–69 (EEEE) are acidic; interacts with host PACS1 and PACS2; stabilizes the interaction of NEF/MHC-I with host AP1M1; necessary for MHC-I internalization. An SH3-binding; interaction with Src family tyrosine kinases region spans residues 73–82 (PVRPQVPLRP). The PxxP; stabilizes the interaction of NEF/MHC-I with host AP1M1; necessary for MHC-I internalization motif lies at 76–79 (PQVP). A mediates dimerization, Nef-PTE1 interaction region spans residues 112 to 128 (EILDLWIYHTQGYFPDW). Residues 152–184 (VEPEKVEEANEGENNSLLHPMSLHGMEDAEKEV) form a binding to ATP6V1H region. The Dileucine internalization motif; necessary for CD4 internalization motif lies at 168 to 169 (LL). The Diacidic; necessary for CD4 internalization motif lies at 178 to 179 (ED).

The protein belongs to the lentivirus primate group Nef protein family. In terms of assembly, monomer; cytosolic form. Homodimer; membrane bound form. Interacts with Nef associated p21-activated kinase (PAK2); this interaction activates PAK2. Associates with the Nef-MHC-I-AP1 complex; this complex is required for MHC-I internalization. Interacts (via C-terminus) with host PI3-kinase. Interacts with host PACS1; this interaction seems to be weak. Interacts with host PACS2. Interacts with host LCK and MAPK3; these interactions inhibit the kinase activity of the latter. Interacts with host ATP6V1H; this interaction may play a role in CD4 endocytosis. Associates with the CD4-Nef-AP2 complex; this complex is required for CD4 internalization. Interacts with host AP2 subunit alpha and AP2 subunit sigma2. Interacts with TCR-zeta chain; this interaction up-regulates the Fas ligand (FasL) surface expression. Interacts with host HCK, LYN, and SRC; these interactions activate the Src family kinases. Interacts with MAP3K5; this interaction inhibits the Fas and TNFR-mediated death signals. Interacts with beta-COP and PTE1. Interacts with human RACK1; this increases Nef phosphorylation by PKC. Interacts with TP53; this interaction decreases the half-life of TP53, protecting the infected cell against p53-mediated apoptosis. Post-translationally, the virion-associated Nef proteins are cleaved by the viral protease to release the soluble C-terminal core protein. Nef is probably cleaved concomitantly with viral structural proteins on maturation of virus particles. In terms of processing, myristoylated. Phosphorylated on serine residues, probably by host PKCdelta and theta.

Its subcellular location is the host cell membrane. The protein localises to the virion. The protein resides in the secreted. It localises to the host Golgi apparatus membrane. Functionally, factor of infectivity and pathogenicity, required for optimal virus replication. Alters numerous pathways of T-lymphocyte function and down-regulates immunity surface molecules in order to evade host defense and increase viral infectivity. Alters the functionality of other immunity cells, like dendritic cells, monocytes/macrophages and NK cells. In infected CD4(+) T-lymphocytes, down-regulates the surface MHC-I, mature MHC-II, CD4, CD28, CCR5 and CXCR4 molecules. Mediates internalization and degradation of host CD4 through the interaction of with the cytoplasmic tail of CD4, the recruitment of AP-2 (clathrin adapter protein complex 2), internalization through clathrin coated pits, and subsequent transport to endosomes and lysosomes for degradation. Diverts host MHC-I molecules to the trans-Golgi network-associated endosomal compartments by an endocytic pathway to finally target them for degradation. MHC-I down-regulation may involve AP-1 (clathrin adapter protein complex 1) or possibly Src family kinase-ZAP70/Syk-PI3K cascade recruited by PACS2. In consequence infected cells are masked for immune recognition by cytotoxic T-lymphocytes. Decreasing the number of immune receptors also prevents reinfection by more HIV particles (superinfection). Down-regulates host SERINC3 and SERINC5 thereby excluding these proteins from the viral particles. Virion infectivity is drastically higher when SERINC3 or SERINC5 are excluded from the viral envelope, because these host antiviral proteins impair the membrane fusion event necessary for subsequent virion penetration. In terms of biological role, bypasses host T-cell signaling by inducing a transcriptional program nearly identical to that of anti-CD3 cell activation. Interaction with TCR-zeta chain up-regulates the Fas ligand (FasL). Increasing surface FasL molecules and decreasing surface MHC-I molecules on infected CD4(+) cells send attacking cytotoxic CD8+ T-lymphocytes into apoptosis. Its function is as follows. Plays a role in optimizing the host cell environment for viral replication without causing cell death by apoptosis. Protects the infected cells from apoptosis in order to keep them alive until the next virus generation is ready to strike. Inhibits the Fas and TNFR-mediated death signals by blocking MAP3K5/ASK1. Decreases the half-life of TP53, protecting the infected cell against p53-mediated apoptosis. Inhibits the apoptotic signals regulated by the Bcl-2 family proteins through the formation of a Nef/PI3-kinase/PAK2 complex that leads to activation of PAK2 and induces phosphorylation of host BAD. Functionally, extracellular Nef protein targets CD4(+) T-lymphocytes for apoptosis by interacting with CXCR4 surface receptors. The protein is Protein Nef of Human immunodeficiency virus type 1 group M subtype B (isolate ARV2/SF2) (HIV-1).